Reading from the N-terminus, the 244-residue chain is Large ribosomal subunit protein uL3 (244 aa).

The protein belongs to the universal ribosomal protein uL3 family. As to quaternary structure, part of the 50S ribosomal subunit. Forms a cluster with proteins L14 and L19.

One of the primary rRNA binding proteins, it binds directly near the 3'-end of the 23S rRNA, where it nucleates assembly of the 50S subunit. This Aquifex pyrophilus protein is Large ribosomal subunit protein uL3.